Consider the following 1356-residue polypeptide: DNA-directed RNA polymerase subunit beta (1356 aa).

The protein belongs to the RNA polymerase beta chain family. The RNAP catalytic core consists of 2 alpha, 1 beta, 1 beta' and 1 omega subunit. When a sigma factor is associated with the core the holoenzyme is formed, which can initiate transcription.

The enzyme catalyses RNA(n) + a ribonucleoside 5'-triphosphate = RNA(n+1) + diphosphate. DNA-dependent RNA polymerase catalyzes the transcription of DNA into RNA using the four ribonucleoside triphosphates as substrates. This chain is DNA-directed RNA polymerase subunit beta, found in Caulobacter vibrioides (strain ATCC 19089 / CIP 103742 / CB 15) (Caulobacter crescentus).